A 389-amino-acid polypeptide reads, in one-letter code: Alanine racemase (389 aa).

The Proton acceptor; specific for D-alanine role is filled by Lys-46. An N6-(pyridoxal phosphate)lysine modification is found at Lys-46. Position 144 (Arg-144) interacts with substrate. Tyr-275 serves as the catalytic Proton acceptor; specific for L-alanine. Met-323 serves as a coordination point for substrate.

This sequence belongs to the alanine racemase family. Pyridoxal 5'-phosphate serves as cofactor.

The catalysed reaction is L-alanine = D-alanine. Its pathway is amino-acid biosynthesis; D-alanine biosynthesis; D-alanine from L-alanine: step 1/1. In terms of biological role, catalyzes the interconversion of L-alanine and D-alanine. May also act on other amino acids. The chain is Alanine racemase (alr) from Mycolicibacterium smegmatis (strain ATCC 700084 / mc(2)155) (Mycobacterium smegmatis).